Consider the following 296-residue polypeptide: 4-hydroxy-tetrahydrodipicolinate synthase (296 aa).

Thr47 provides a ligand contact to pyruvate. The active-site Proton donor/acceptor is Tyr135. Lys163 functions as the Schiff-base intermediate with substrate in the catalytic mechanism. Position 205 (Ile205) interacts with pyruvate.

It belongs to the DapA family. In terms of assembly, homotetramer; dimer of dimers.

It localises to the cytoplasm. It catalyses the reaction L-aspartate 4-semialdehyde + pyruvate = (2S,4S)-4-hydroxy-2,3,4,5-tetrahydrodipicolinate + H2O + H(+). It functions in the pathway amino-acid biosynthesis; L-lysine biosynthesis via DAP pathway; (S)-tetrahydrodipicolinate from L-aspartate: step 3/4. Catalyzes the condensation of (S)-aspartate-beta-semialdehyde [(S)-ASA] and pyruvate to 4-hydroxy-tetrahydrodipicolinate (HTPA). This chain is 4-hydroxy-tetrahydrodipicolinate synthase, found in Macrococcus caseolyticus (strain JCSC5402) (Macrococcoides caseolyticum).